The primary structure comprises 265 residues: Expansin-like A2 (265 aa).

Positions 1 to 21 (MLQGFLFLLSVVLLFSSSAAA) are cleaved as a signal peptide. The Expansin-like EG45 domain occupies 42-148 (SGACAYGSMA…RRVPCDYGNK (107 aa)). N100 and N103 each carry an N-linked (GlcNAc...) asparagine glycan. An Expansin-like CBD domain is found at 162-244 (NYLAIKLLYQ…NWEAGKSYDA (83 aa)).

This sequence belongs to the expansin family. Expansin-like A subfamily.

The protein localises to the secreted. In Arabidopsis thaliana (Mouse-ear cress), this protein is Expansin-like A2 (EXLA2).